A 314-amino-acid chain; its full sequence is DegV domain-containing protein XCC3382 (314 aa).

The DegV domain occupies 3–307 (IGIVVDSACD…KGALAVAFAA (305 aa)). Residues threonine 63 and serine 96 each coordinate hexadecanoate.

Functionally, may bind long-chain fatty acids, such as palmitate, and may play a role in lipid transport or fatty acid metabolism. The chain is DegV domain-containing protein XCC3382 from Xanthomonas campestris pv. campestris (strain ATCC 33913 / DSM 3586 / NCPPB 528 / LMG 568 / P 25).